The primary structure comprises 119 residues: NADH-quinone oxidoreductase subunit 7 (119 aa).

3 helical membrane-spanning segments follow: residues 11 to 31 (LIYVGVALFIGVAALLVGALL), 59 to 79 (VHFYVVAMLFILFDVEVAFLW), and 88 to 108 (LGLYGFLGVLAFTLLLFVGFL).

The protein belongs to the complex I subunit 3 family. In terms of assembly, NDH-1 is composed of 15 different subunits, Nqo1 to Nqo15. The complex has a L-shaped structure, with the hydrophobic arm (subunits Nqo7, Nqo8 and Nqo10 to Nqo14) embedded in the membrane and the hydrophilic peripheral arm (subunits Nqo1 to Nqo6, Nqo9 and Nqo15) protruding into the bacterial cytoplasm. The hydrophilic domain contains all the redox centers.

It is found in the cell inner membrane. It catalyses the reaction a quinone + NADH + 5 H(+)(in) = a quinol + NAD(+) + 4 H(+)(out). In terms of biological role, NDH-1 shuttles electrons from NADH, via FMN and iron-sulfur (Fe-S) centers, to quinones in the respiratory chain. The immediate electron acceptor for the enzyme in this species is menaquinone. Couples the redox reaction to proton translocation (for every two electrons transferred, four hydrogen ions are translocated across the cytoplasmic membrane), and thus conserves the redox energy in a proton gradient required for the synthesis of ATP. This is NADH-quinone oxidoreductase subunit 7 (nqo7) from Thermus thermophilus (strain ATCC 27634 / DSM 579 / HB8).